The following is a 157-amino-acid chain: Succinate dehydrogenase assembly factor 2-A, mitochondrial (157 aa).

The N-terminal 21 residues, 1-21 (MLRQVLSSTSVRRLLVSPTRC), are a transit peptide targeting the mitochondrion.

Belongs to the SDHAF2 family. In terms of assembly, interacts with the flavoprotein subunit within the SDH catalytic dimer.

It is found in the mitochondrion matrix. Its function is as follows. Plays an essential role in the assembly of succinate dehydrogenase (SDH), an enzyme complex (also referred to as respiratory complex II) that is a component of both the tricarboxylic acid (TCA) cycle and the mitochondrial electron transport chain, and which couples the oxidation of succinate to fumarate with the reduction of ubiquinone (coenzyme Q) to ubiquinol. Required for flavinylation (covalent attachment of FAD) of the flavoprotein subunit of the SDH catalytic dimer. This Drosophila mojavensis (Fruit fly) protein is Succinate dehydrogenase assembly factor 2-A, mitochondrial.